The primary structure comprises 3258 residues: Protein unc-80 homolog (3258 aa).

Residues 152–173 (VENQGSPGQPCQSSSNDEEENN) are disordered. Positions 155–166 (QGSPGQPCQSSS) are enriched in low complexity. Ser-257 bears the Phosphoserine mark. 9 disordered regions span residues 291–316 (RGNS…RASL), 449–468 (RKED…GKRR), 522–560 (RRGS…HGEN), 697–717 (KKSE…GAFQ), 732–784 (PAVS…TPVS), 963–1019 (PGKK…EQMQ), 1034–1076 (KSQS…ISLR), 1404–1447 (EDSK…MSNA), and 1817–1836 (AVSA…HHVP). Residues 295–307 (FDGSLSSQTSQER) show a composition bias toward polar residues. Ser-525 bears the Phosphoserine mark. Basic and acidic residues predominate over residues 698-712 (KSENKENETLEKRPS). The segment covering 732–767 (PAVSGAGDGGGEEGGGGDGGGGGGDGGGGGGGGGGP) has biased composition (gly residues). Basic and acidic residues-rich tracts occupy residues 769 to 780 (EKNDKNQEKDES) and 965 to 974 (KKVEENEQES). Residues 1035-1052 (SQSAASDTSSQSEQDTSE) show a composition bias toward low complexity. Residues 1066–1076 (ARSRSRRISLR) are compositionally biased toward basic residues. The span at 1417–1429 (LKSDAGVEEKKEG) shows a compositional bias: basic and acidic residues. 4 helical membrane-spanning segments follow: residues 2268 to 2288 (PFVL…DAAN), 2398 to 2418 (IAAT…VEVL), 2785 to 2805 (GLAE…LVCF), and 2831 to 2851 (LALW…FVLL). Polar residues predominate over residues 2942–2964 (NTGTGTVWEQDSEPSQQASQDTL). Residues 2942-2982 (NTGTGTVWEQDSEPSQQASQDTLSRTDEEDEENDSISMPSV) form a disordered region. Phosphoserine is present on Ser-3042. Positions 3051-3213 (NLLVQQPLGR…DDFTGLETSS (163 aa)) are disordered. The span at 3059 to 3068 (GRKRGLRQLR) shows a compositional bias: basic residues. Over residues 3088–3100 (RLSTTRRSIQPKT) the composition is skewed to polar residues. Over residues 3117–3129 (PEPAAAPTDALPA) the composition is skewed to low complexity. The segment covering 3175–3186 (PTEEGEKEEDTE) has biased composition (acidic residues).

It belongs to the unc-80 family. NALCN complex consists of NALCN and auxiliary subunits, UNC79, UNC80 and NACL1. These auxiliary subunits are essential for the NALCN complex function. Interacts (via N-terminus half) with NALCN; this interaction facilitates NALCN surface localization. Interacts with UNC79. UNC80 bridges NALCN to UNC79. In terms of processing, phosphorylated on tyrosine residues. In terms of tissue distribution, moderately expressed in fetal brain, spinal cord, skeletal muscle, thymus, spleen, fetal liver, small intestine, colon, kidney and uterus. Highly expressed in adrenal gland, prostate and testis, as well as in brain and cerebellum.

Its subcellular location is the cell membrane. In terms of biological role, auxiliary subunit of the NALCN sodium channel complex, a voltage-gated ion channel responsible for the resting Na(+) permeability that controls neuronal excitability. Activated by neuropeptides substance P, neurotensin, and extracellular Ca(2+) that regulates neuronal excitability by controlling the sizes of NALCN-dependent sodium-leak current. UNC80 is essential for NALCN sensitivity to extracellular Ca(2+). The chain is Protein unc-80 homolog from Homo sapiens (Human).